The chain runs to 670 residues: Leucine-rich repeat-containing protein 45 (670 aa).

LRR repeat units follow at residues 58-80 (TLCTELVLSDCMLSEEGATLLLR), 87-107 (VLRFLDLKGNNLRAAGAEALG), 115-136 (SIQSLTLEWNSLGTWDDAFATF), 145-166 (ALQRLDLRNNQISHKGAEELAL), 173-194 (TLQQLDLRWNNVGLLGGRALMN), and 201-212 (TLWRLDLAGNNI). The stretch at 252–645 (REEKSKQFLD…IARIRDEEAQ (394 aa)) forms a coiled coil. At serine 661 the chain carries Phosphoserine; by NEK2.

In terms of assembly, homomer. Interacts with CROCC/rootletin and CEP250. Interacts with CEP44. Interacts with CCDC102B (via N-terminus). In terms of processing, phosphorylated by NEK2 during misosis, phosphorylation reduces centrosomal localization which subsequently leads to centrosome separation.

Its subcellular location is the cytoplasm. It is found in the cytoskeleton. The protein localises to the microtubule organizing center. It localises to the centrosome. Component of the proteinaceous fiber-like linker between two centrioles, required for centrosome cohesion. This is Leucine-rich repeat-containing protein 45 (LRRC45) from Homo sapiens (Human).